Reading from the N-terminus, the 294-residue chain is TBC1 domain family member 7 (294 aa).

The Rab-GAP TBC domain occupies 50–232; the sequence is PLPSMYRIHV…RVWDKVISGS (183 aa).

In terms of assembly, component of the TSC-TBC complex (also named Rhebulator complex), composed of 2 molecules of TSC1, 2 molecules of TSC2 and 1 molecule of TBC1D7.

It is found in the lysosome membrane. The protein localises to the cytoplasmic vesicle. Its subcellular location is the cytoplasm. It localises to the cytosol. Its function is as follows. Non-catalytic component of the TSC-TBC complex, a multiprotein complex that acts as a negative regulator of the canonical mTORC1 complex, an evolutionarily conserved central nutrient sensor that stimulates anabolic reactions and macromolecule biosynthesis to promote cellular biomass generation and growth. The TSC-TBC complex acts as a GTPase-activating protein (GAP) for the small GTPase RHEB, a direct activator of the protein kinase activity of mTORC1. In absence of nutrients, the TSC-TBC complex inhibits mTORC1, thereby preventing phosphorylation of ribosomal protein S6 kinase (RPS6KB1 and RPS6KB2) and EIF4EBP1 (4E-BP1) by the mTORC1 signaling. The TSC-TBC complex is inactivated in response to nutrients, relieving inhibition of mTORC1. This is TBC1 domain family member 7 (tbc1d7) from Danio rerio (Zebrafish).